The primary structure comprises 462 residues: Metal cation symporter ZIP8 (462 aa).

Positions 1-19 (MAPGRAVAGLLLLAATSLG) are cleaved as a signal peptide. Residues 20–132 (HPSEGPELAF…PSLSEVWGYG (113 aa)) lie on the Extracellular side of the membrane. N-linked (GlcNAc...) asparagine glycosylation is found at Asn-40, Asn-88, and Asn-96. The helical transmembrane segment at 133-153 (FLSVTIINLASLLGLILTPLI) threads the bilayer. The Cytoplasmic portion of the chain corresponds to 154-160 (KKSYFPK). The helical transmembrane segment at 161-181 (ILTYFVGLAIGTLFSNAIFQL) threads the bilayer. Residues 182–191 (IPEAFGFNPK) are Extracellular-facing. A helical membrane pass occupies residues 192-212 (IDNYVEKAVAVFGGFYMLFFV). At 213 to 367 (ERTLKMLLKT…LNAGMSTRQA (155 aa)) the chain is on the cytoplasmic side. The short motif at 345-350 (EEFPHE) is the XEXPHE-motif element. The helical transmembrane segment at 368-388 (LLFNFLSACSCYVGLAFGILV) threads the bilayer. The Extracellular segment spans residues 389 to 390 (GN). Residues 391–411 (NFAPNIIFALAGGMFLYISLA) form a helical membrane-spanning segment. The Cytoplasmic portion of the chain corresponds to 412 to 431 (DMFPEMNDMLREKVTGRQTD). The chain crosses the membrane as a helical span at residues 432–452 (FTFFMIQNAGMLTGFTAILLI). Residues 453–462 (TLYAGDIELQ) lie on the Extracellular side of the membrane.

This sequence belongs to the ZIP transporter (TC 2.A.5) family. In terms of assembly, homodimer. N-glycosylated. N-glycosylation is not required for proper iron and zinc transport. In terms of tissue distribution, ubiquitously expressed.

Its subcellular location is the cell membrane. The protein resides in the apical cell membrane. It localises to the basolateral cell membrane. It is found in the lysosome membrane. The enzyme catalyses Zn(2+)(out) + 2 hydrogencarbonate(out) = Zn(2+)(in) + 2 hydrogencarbonate(in). It catalyses the reaction selenite(out) + Zn(2+)(out) + hydrogencarbonate(out) = selenite(in) + Zn(2+)(in) + hydrogencarbonate(in). It carries out the reaction Mn(2+)(out) + 2 hydrogencarbonate(out) = Mn(2+)(in) + 2 hydrogencarbonate(in). The catalysed reaction is Cd(2+)(out) + 2 hydrogencarbonate(out) = Cd(2+)(in) + 2 hydrogencarbonate(in). The enzyme catalyses Fe(2+)(out) + 2 hydrogencarbonate(out) = Fe(2+)(in) + 2 hydrogencarbonate(in). It catalyses the reaction Co(2+)(out) + 2 hydrogencarbonate(out) = Co(2+)(in) + 2 hydrogencarbonate(in). Its function is as follows. Electroneutral divalent metal cation:bicarbonate symporter of the plasma membrane mediating the cellular uptake of zinc and manganese, two divalent metal cations important for development, tissue homeostasis and immunity. Transports an electroneutral complex composed of a divalent metal cation and two bicarbonate anions or alternatively a bicarbonate and a selenite anion. Thereby, it also contributes to the cellular uptake of selenium, an essential trace metal and micronutrient. Also imports cadmium a non-essential metal which is cytotoxic and carcinogenic. May also transport iron and cobalt through membranes. Through zinc import, indirectly regulates the metal-dependent transcription factor MTF1 and the expression of some metalloproteases involved in cartilage catabolism and also probably heart development. Also indirectly regulates the expression of proteins involved in cell morphology and cytoskeleton organization. Indirectly controls innate immune function and inflammatory response by regulating zinc cellular uptake which in turn modulates the expression of genes specific of these processes. Protects, for instance, cells from injury and death at the onset of inflammation. By regulating zinc influx into monocytes also directly modulates their adhesion to endothelial cells and arteries. Reclaims manganese from the bile at the apical membrane of hepatocytes, thereby regulating the activity of the manganese-dependent enzymes through the systemic levels of the nutrient. Also participates in manganese reabsorption in the proximal tubule of the kidney. By mediating the extracellular uptake of manganese by cells of the blood-brain barrier, may also play a role in the transport of the micronutrient to the brain. With manganese cellular uptake also participates in mitochondrial proper function. Finally, also probably functions intracellularly, translocating zinc from lysosome to cytosol to indirectly enhance the expression of specific genes during TCR-mediated T cell activation. This is Metal cation symporter ZIP8 from Mus musculus (Mouse).